A 976-amino-acid polypeptide reads, in one-letter code: Alpha-amylase (976 aa).

The first 33 residues, 1–33 (MKRGKLWGRLVSAAGLSLSIFLSSIGNVSTAYA), serve as a signal peptide directing secretion. The interval 45–98 (TKENTESATDASSNEASDAEADNDTDEAITDASSKELSAENDGASESDSSFDEY) is disordered. The segment covering 50-60 (ESATDASSNEA) has biased composition (low complexity). Composition is skewed to acidic residues over residues 61 to 73 (SDAE…DEAI) and 87 to 96 (GASESDSSFD). Asn243, Thr284, and Asp293 together coordinate Ca(2+). Catalysis depends on Asp323, which acts as the Nucleophile. His327 contributes to the Ca(2+) binding site. The Proton donor role is filled by Glu375.

The protein belongs to the glycosyl hydrolase 13 family. As to quaternary structure, monomer. It depends on Ca(2+) as a cofactor.

The catalysed reaction is Endohydrolysis of (1-&gt;4)-alpha-D-glucosidic linkages in polysaccharides containing three or more (1-&gt;4)-alpha-linked D-glucose units.. The sequence is that of Alpha-amylase (amyA) from Butyrivibrio fibrisolvens.